Reading from the N-terminus, the 892-residue chain is Protein translocase subunit SecA (892 aa).

Residues Gln-89, 107 to 111, and Asp-517 each bind ATP; that span reads GEGKT. Zn(2+)-binding residues include Cys-879, Cys-881, Cys-890, and His-891.

It belongs to the SecA family. Monomer and homodimer. Part of the essential Sec protein translocation apparatus which comprises SecA, SecYEG and auxiliary proteins SecDF-YajC and YidC. Zn(2+) serves as cofactor.

It is found in the cell inner membrane. The protein resides in the cytoplasm. The catalysed reaction is ATP + H2O + cellular proteinSide 1 = ADP + phosphate + cellular proteinSide 2.. Its function is as follows. Part of the Sec protein translocase complex. Interacts with the SecYEG preprotein conducting channel. Has a central role in coupling the hydrolysis of ATP to the transfer of proteins into and across the cell membrane, serving as an ATP-driven molecular motor driving the stepwise translocation of polypeptide chains across the membrane. The sequence is that of Protein translocase subunit SecA from Ruthia magnifica subsp. Calyptogena magnifica.